The chain runs to 89 residues: Small ribosomal subunit protein uS15 (89 aa).

Over residues 1–13 the composition is skewed to basic and acidic residues; that stretch reads MYLTSEKKEEIFS. The tract at residues 1 to 24 is disordered; it reads MYLTSEKKEEIFSKHGKGKNDTGS.

This sequence belongs to the universal ribosomal protein uS15 family. Part of the 30S ribosomal subunit. Forms a bridge to the 50S subunit in the 70S ribosome, contacting the 23S rRNA.

One of the primary rRNA binding proteins, it binds directly to 16S rRNA where it helps nucleate assembly of the platform of the 30S subunit by binding and bridging several RNA helices of the 16S rRNA. Functionally, forms an intersubunit bridge (bridge B4) with the 23S rRNA of the 50S subunit in the ribosome. The polypeptide is Small ribosomal subunit protein uS15 (Christiangramia forsetii (strain DSM 17595 / CGMCC 1.15422 / KT0803) (Gramella forsetii)).